We begin with the raw amino-acid sequence, 895 residues long: Serine-rich coiled-coil domain-containing protein 1 (895 aa).

4 disordered regions span residues 1–142 (MGDS…KEPS), 154–177 (SGRSEGDDSGFTEEQSRRSIKQST), 332–394 (ELHS…RTLG), and 459–497 (RSSSEGTAGSSRMVLKPKDGHVEASSLRKHRTGSSSSKM). The segment covering 43–56 (SSSPSSTNSSSGST) has biased composition (low complexity). Positions 83–102 (TEQNLSISNGAQPSHSNMQK) are enriched in polar residues. A compositionally biased stretch (basic and acidic residues) spans 131–142 (LTEDFEREKEPS). Polar residues predominate over residues 348–358 (SLQSTELSVGN). Positions 675-705 (MLRLQLKDRDELISQLQAELEKVQHLQKAFA) form a coiled coil. Residues 731 to 753 (QGGRETTHRNRTMSQSHSTRDRK) are disordered.

Belongs to the CCSER family.

In Mus musculus (Mouse), this protein is Serine-rich coiled-coil domain-containing protein 1 (Ccser1).